The chain runs to 1049 residues: DEAD-box ATP-dependent RNA helicase 42 (1049 aa).

Disordered stretches follow at residues 1 to 279 (MGSS…DEID) and 299 to 358 (MPAA…DDEE). The span at 64–106 (KERDREERKAREREEREKEKERERARRREERDREERSRRREAA) shows a compositional bias: basic and acidic residues. The span at 118–131 (RKRRRRSSHHHHHH) shows a compositional bias: basic residues. 2 stretches are compositionally biased toward basic and acidic residues: residues 161-170 (KKEEEQKQLD) and 181-199 (KEWQ…REQE). Positions 201–214 (AGVGTSAAAAAAPA) are enriched in low complexity. Residues 229 to 239 (DGEESDEEGNQ) show a composition bias toward acidic residues. Positions 262 to 272 (NGGDNANGANA) are enriched in low complexity. Residues 304–313 (VDDKNDKSAK) are compositionally biased toward basic and acidic residues. Acidic residues predominate over residues 335 to 358 (EDSDSDYADDEDDEGGSEDEDDEE). A Q motif motif is present at residues 424–452 (KTWVQSGLTSKLLDTIKKLGFEKPMSIQA). The 179-residue stretch at 455–633 (LPIIMSGRDC…RKVLTKPVEI (179 aa)) folds into the Helicase ATP-binding domain. Residue 468–475 (AKTGSGKT) participates in ATP binding. Positions 581–584 (DEAD) match the DEAD box motif. The Helicase C-terminal domain occupies 644–805 (DITQLVEVRP…AVPEDLKGLA (162 aa)). The disordered stretch occupies residues 816–868 (TEQAHGTGYGGSGFKFNEEEDEARKSAKKAQAREYGYEEDKSDSDSDEEGGVR). The span at 855 to 864 (DKSDSDSDEE) shows a compositional bias: acidic residues. Residues 1012 to 1037 (TELSVKKAKAELKRVLEDCANHALNL) are a coiled coil.

This sequence belongs to the DEAD box helicase family. DDX46/PRP5 subfamily.

The enzyme catalyses ATP + H2O = ADP + phosphate + H(+). The protein is DEAD-box ATP-dependent RNA helicase 42 of Oryza sativa subsp. japonica (Rice).